Here is a 62-residue protein sequence, read N- to C-terminus: Toxin Tb2 (62 aa).

The LCN-type CS-alpha/beta domain occupies K1–C62. 4 disulfides stabilise this stretch: C11/C62, C15/C38, C23/C43, and C27/C45. C62 bears the Cysteine amide mark.

It belongs to the long (4 C-C) scorpion toxin superfamily. Sodium channel inhibitor family. Beta subfamily. As to expression, expressed by the venom gland.

The protein localises to the secreted. Beta toxins bind voltage-independently at site-4 of sodium channels (Nav) and shift the voltage of activation toward more negative potentials thereby affecting sodium channel activation and promoting spontaneous and repetitive firing. This toxin is active on mammals. In Tityus bahiensis (Brazilian scorpion), this protein is Toxin Tb2.